We begin with the raw amino-acid sequence, 66 residues long: Photosystem II reaction center protein H (66 aa).

Residues 27–47 traverse the membrane as a helical segment; that stretch reads GAVPVMTVIGLLLLVFLVILL.

The protein belongs to the PsbH family. PSII is composed of 1 copy each of membrane proteins PsbA, PsbB, PsbC, PsbD, PsbE, PsbF, PsbH, PsbI, PsbJ, PsbK, PsbL, PsbM, PsbT, PsbX, PsbY, Psb30/Ycf12, peripheral proteins PsbO, CyanoQ (PsbQ), PsbU, PsbV and a large number of cofactors. It forms dimeric complexes.

The protein resides in the cellular thylakoid membrane. In terms of biological role, one of the components of the core complex of photosystem II (PSII), required for its stability and/or assembly. PSII is a light-driven water:plastoquinone oxidoreductase that uses light energy to abstract electrons from H(2)O, generating O(2) and a proton gradient subsequently used for ATP formation. It consists of a core antenna complex that captures photons, and an electron transfer chain that converts photonic excitation into a charge separation. This is Photosystem II reaction center protein H from Prochlorococcus marinus (strain MIT 9215).